Here is a 301-residue protein sequence, read N- to C-terminus: Sulfate adenylyltransferase subunit 2 (301 aa).

Residues 279 to 301 form a disordered region; sequence RQGRLIDRDEAGSMEKKKREGYF.

It belongs to the PAPS reductase family. CysD subfamily. In terms of assembly, heterodimer composed of CysD, the smaller subunit, and CysN.

The catalysed reaction is sulfate + ATP + H(+) = adenosine 5'-phosphosulfate + diphosphate. Its pathway is sulfur metabolism; hydrogen sulfide biosynthesis; sulfite from sulfate: step 1/3. Its function is as follows. With CysN forms the ATP sulfurylase (ATPS) that catalyzes the adenylation of sulfate producing adenosine 5'-phosphosulfate (APS) and diphosphate, the first enzymatic step in sulfur assimilation pathway. APS synthesis involves the formation of a high-energy phosphoric-sulfuric acid anhydride bond driven by GTP hydrolysis by CysN coupled to ATP hydrolysis by CysD. The chain is Sulfate adenylyltransferase subunit 2 from Mesorhizobium japonicum (strain LMG 29417 / CECT 9101 / MAFF 303099) (Mesorhizobium loti (strain MAFF 303099)).